The sequence spans 181 residues: Large ribosomal subunit protein uL5 (181 aa).

Belongs to the universal ribosomal protein uL5 family. Part of the 50S ribosomal subunit; part of the 5S rRNA/L5/L18/L25 subcomplex. Contacts the 5S rRNA and the P site tRNA. Forms a bridge to the 30S subunit in the 70S ribosome.

In terms of biological role, this is one of the proteins that bind and probably mediate the attachment of the 5S RNA into the large ribosomal subunit, where it forms part of the central protuberance. In the 70S ribosome it contacts protein S13 of the 30S subunit (bridge B1b), connecting the 2 subunits; this bridge is implicated in subunit movement. Contacts the P site tRNA; the 5S rRNA and some of its associated proteins might help stabilize positioning of ribosome-bound tRNAs. This chain is Large ribosomal subunit protein uL5, found in Helicobacter pylori (strain Shi470).